Here is a 300-residue protein sequence, read N- to C-terminus: uncharacterized protein (300 aa).

This sequence belongs to the chlamydial CPn_0593/CT_474/TC_0759 family.

This is an uncharacterized protein from Chlamydia muridarum (strain MoPn / Nigg).